The chain runs to 1102 residues: Coiled-coil domain-containing protein AGAP005037 (1102 aa).

The span at 1–11 (MLIRWKSKDKS) shows a compositional bias: basic and acidic residues. Disordered regions lie at residues 1–69 (MLIR…HTLG) and 295–318 (HKSK…RGMY). Positions 12–21 (SSSTSSSSST) are enriched in low complexity. The segment covering 50–65 (IDDRRRSARSREDPRR) has biased composition (basic and acidic residues). Residues 405 to 430 (HRIRVEHMERQLANLTGLVQKALTQN) adopt a coiled-coil conformation. Disordered stretches follow at residues 450–475 (RNAE…STCH) and 489–539 (DIQG…PLVM). 2 coiled-coil regions span residues 554 to 579 (EVYN…LRRL) and 614 to 654 (DKER…EVIN). Disordered stretches follow at residues 745–774 (LPIP…PSPR), 832–958 (TKIS…CSDN), and 1031–1087 (LCGG…TLPP). Residues 832–849 (TKISQSQLYPSEPVSSNV) are compositionally biased toward polar residues. Positions 867–881 (PPQPTRPTTGKPPVP) are enriched in pro residues. Over residues 904 to 918 (TSSRSPLASPTSPHV) the composition is skewed to low complexity. The span at 936 to 958 (DCEQQQRTSEGTDSGSESVCSDN) shows a compositional bias: polar residues.

The protein is Coiled-coil domain-containing protein AGAP005037 of Anopheles gambiae (African malaria mosquito).